The chain runs to 495 residues: Lysine--tRNA ligase (495 aa).

The Mg(2+) site is built by glutamate 406 and glutamate 413.

This sequence belongs to the class-II aminoacyl-tRNA synthetase family. In terms of assembly, homodimer. Mg(2+) is required as a cofactor.

The protein localises to the cytoplasm. It catalyses the reaction tRNA(Lys) + L-lysine + ATP = L-lysyl-tRNA(Lys) + AMP + diphosphate. In Staphylococcus aureus (strain MRSA252), this protein is Lysine--tRNA ligase.